We begin with the raw amino-acid sequence, 61 residues long: Temporin-ALi (61 aa).

An N-terminal signal peptide occupies residues 1 to 22 (MFPLKKSLLLLFFLATINLSLC). The propeptide occupies 23–46 (EQERNAEEERRDEPDERNAEVEKR). Residue L59 is modified to Leucine amide.

This sequence belongs to the frog skin active peptide (FSAP) family. Temporin subfamily. In terms of tissue distribution, expressed by the skin glands.

The protein localises to the secreted. In terms of biological role, antimicrobial peptide with activity against Gram-positive and Gram-negative bacteria and against fungi. Has been tested against S.aureus (MIC=7.5 ug/mL), B.pumilus (MIC=7.5 ug/mL), B.cereus (MIC=75.0 ug/mL), E.coli (MIC=7.5 ug/mL), B.dysenteriae (MIC=20.0 ug/mL), A.cacoaceticus (MIC=60.0 ug/mL), P.aeruginosa (MIC=5.0 ug/mL) and C.albicans (MIC=5.0 ug/mL). Also shows a weak hemolytic activity. The protein is Temporin-ALi of Amolops loloensis (Lolokou Sucker Frog).